The sequence spans 597 residues: Hydrogenase-1 large chain (597 aa).

Ni(2+) contacts are provided by Cys-76, Cys-79, Cys-576, and Cys-579.

The protein belongs to the [NiFe]/[NiFeSe] hydrogenase large subunit family. Heterodimer of a large and a small subunit. It depends on Ni(2+) as a cofactor.

It localises to the cell membrane. The enzyme catalyses H2 + A = AH2. In Citrobacter freundii, this protein is Hydrogenase-1 large chain (hyaB).